Consider the following 457-residue polypeptide: Argininosuccinate lyase (457 aa).

The protein belongs to the lyase 1 family. Argininosuccinate lyase subfamily.

The protein resides in the cytoplasm. It catalyses the reaction 2-(N(omega)-L-arginino)succinate = fumarate + L-arginine. It participates in amino-acid biosynthesis; L-arginine biosynthesis; L-arginine from L-ornithine and carbamoyl phosphate: step 3/3. This chain is Argininosuccinate lyase, found in Klebsiella pneumoniae (strain 342).